The sequence spans 161 residues: Glycine cleavage system H protein 2 (161 aa).

The 83-residue stretch at 34–116 (TVTVGVTDIG…YGEGWIAKLK (83 aa)) folds into the Lipoyl-binding domain. At Lys75 the chain carries N6-lipoyllysine.

This sequence belongs to the GcvH family. In terms of assembly, the glycine cleavage system is composed of four proteins: P, T, L and H. It depends on (R)-lipoate as a cofactor.

Functionally, the glycine cleavage system catalyzes the degradation of glycine. The H protein shuttles the methylamine group of glycine from the P protein to the T protein. The chain is Glycine cleavage system H protein 2 from Aquifex aeolicus (strain VF5).